The chain runs to 202 residues: Ribosome maturation factor RimM (202 aa).

A PRC barrel domain is found at 121 to 202 (ADEYYWVDLI…CITVDWQPDY (82 aa)).

It belongs to the RimM family. Binds ribosomal protein uS19.

It localises to the cytoplasm. An accessory protein needed during the final step in the assembly of 30S ribosomal subunit, possibly for assembly of the head region. Essential for efficient processing of 16S rRNA. May be needed both before and after RbfA during the maturation of 16S rRNA. It has affinity for free ribosomal 30S subunits but not for 70S ribosomes. In Polaromonas naphthalenivorans (strain CJ2), this protein is Ribosome maturation factor RimM.